The sequence spans 548 residues: MIEFAVAGLSDPVQATVPWLSLSILVPIGGALLIPFIPDQGEGKQIRWYALIVTLITFLITVAAYLTGYDPSLSGLQLFERVSWLPEIGLTWTVGADGLSMPLILLTSFITSLACLAAWPVTFKPRLFFFLLLAMDGGQIAVFAVQDMLLFFLAWELELLPVYLLLAIWGGKKRQYAATKFILYTAGSSLFILLAALAMGFFGGGTPSFEYTALAAKDFGSGFQLLCYAGLLIAFGVKLPIVPLHTWLPDAHGEATAPVHMLLAGILLKMGGYALLRFNCELLPAAHAQFAPLLIVLGVVNIIYAALTSFAQRNLKRKIAYSSISHMGFVLIGIGSFSVLGSSGAMLQMISHGLIGASLFFLVGATYDRTHTLLLDEMGGIGQKMRIMFALWTVCALASLALPGMSGFVSELMIFAGFATDEAYTLPFRVVICGLAAVGVVLTPVYLLSMLREIFFGKEKAELASHTNLVDAEPREVYIIGCLLVPIIGIGLYPRLMTDSFSSSIEALVSRDVTAMEQLTKPTAPLIRGQSTVPAILRAPNLGTPTPK.

14 consecutive transmembrane segments (helical) span residues 17-37, 48-68, 103-123, 127-147, 149-169, 181-201, 222-242, 256-276, 290-310, 327-347, 348-368, 389-409, 430-450, and 477-497; these read VPWLSLSILVPIGGALLIPFI, WYALIVTLITFLITVAAYLTG, LILLTSFITSLACLAAWPVTF, LFFFLLLAMDGGQIAVFAVQD, LLFFLAWELELLPVYLLLAIW, FILYTAGSSLFILLAALAMGF, GFQLLCYAGLLIAFGVKLPIV, TAPVHMLLAGILLKMGGYALL, FAPLLIVLGVVNIIYAALTSF, MGFVLIGIGSFSVLGSSGAML, QMISHGLIGASLFFLVGATYD, FALWTVCALASLALPGMSGFV, VVICGLAAVGVVLTPVYLLSM, and VYIIGCLLVPIIGIGLYPRLM.

It belongs to the complex I subunit 4 family.

The protein resides in the cellular thylakoid membrane. The catalysed reaction is a plastoquinone + NADH + (n+1) H(+)(in) = a plastoquinol + NAD(+) + n H(+)(out). It catalyses the reaction a plastoquinone + NADPH + (n+1) H(+)(in) = a plastoquinol + NADP(+) + n H(+)(out). Its function is as follows. NDH-1 shuttles electrons from NAD(P)H, via FMN and iron-sulfur (Fe-S) centers, to quinones in the respiratory chain. The immediate electron acceptor for the enzyme in this species is believed to be plastoquinone. Couples the redox reaction to proton translocation (for every two electrons transferred, four hydrogen ions are translocated across the cytoplasmic membrane), and thus conserves the redox energy in a proton gradient. This chain is NAD(P)H-quinone oxidoreductase chain 4, found in Synechococcus sp. (strain CC9902).